A 467-amino-acid polypeptide reads, in one-letter code: Acid phosphatase PHO11 (467 aa).

The signal sequence occupies residues 1 to 17 (MLKSAVYSILAASLVNA). Catalysis depends on histidine 75, which acts as the Nucleophile. Asparagine 97, asparagine 162, asparagine 192, asparagine 250, and asparagine 315 each carry an N-linked (GlcNAc...) asparagine glycan. The active-site Proton donor is aspartate 338. Asparagine 356, asparagine 390, asparagine 439, asparagine 445, and asparagine 461 each carry an N-linked (GlcNAc...) asparagine glycan.

Belongs to the histidine acid phosphatase family. In terms of processing, glycosylated during secretion across the membrane.

It carries out the reaction a phosphate monoester + H2O = an alcohol + phosphate. The sequence is that of Acid phosphatase PHO11 (PHO11) from Saccharomyces cerevisiae (strain ATCC 204508 / S288c) (Baker's yeast).